The chain runs to 1141 residues: Eukaryotic translation initiation factor 3 subunit A (1141 aa).

One can recognise a PCI domain in the interval 319–501; the sequence is LQRMAAHVLL…NSIYFGTDLT (183 aa). 2 stretches are compositionally biased toward basic and acidic residues: residues 588 to 623 and 829 to 899; these read QNNA…EERE and AAEE…RGGD. Disordered regions lie at residues 588 to 631 and 829 to 1141; these read QNNA…QNEI and AAEE…VKRR. Residue Ser-908 is modified to Phosphoserine. Basic and acidic residues-rich tracts occupy residues 920–976, 990–1051, 1059–1087, and 1110–1131; these read ERND…EPDT, SRDD…EPQR, DAPR…RGDQ, and TREE…KAGD.

Belongs to the eIF-3 subunit A family. Component of the eukaryotic translation initiation factor 3 (eIF-3) complex. The eIF-3 complex interacts with pix.

Its subcellular location is the cytoplasm. RNA-binding component of the eukaryotic translation initiation factor 3 (eIF-3) complex, which is involved in protein synthesis of a specialized repertoire of mRNAs and, together with other initiation factors, stimulates binding of mRNA and methionyl-tRNAi to the 40S ribosome. The eIF-3 complex specifically targets and initiates translation of a subset of mRNAs involved in cell proliferation. The chain is Eukaryotic translation initiation factor 3 subunit A from Drosophila sechellia (Fruit fly).